The chain runs to 76 residues: cAMP-dependent protein kinase inhibitor alpha (76 aa).

Threonine 2 is subject to N-acetylthreonine. The tract at residues 49–76 (KTEGEEDAQRSSTEQSGEAQGEAAKSES) is disordered.

The protein belongs to the PKI family.

Extremely potent competitive inhibitor of cAMP-dependent protein kinase activity, this protein interacts with the catalytic subunit of the enzyme after the cAMP-induced dissociation of its regulatory chains. In Homo sapiens (Human), this protein is cAMP-dependent protein kinase inhibitor alpha (PKIA).